Reading from the N-terminus, the 890-residue chain is Leucine-rich repeat receptor-like tyrosine-protein kinase PXC3 (890 aa).

The first 23 residues, 1–23, serve as a signal peptide directing secretion; that stretch reads MTFWCMSILLIVGFLSKSELCEA. The Extracellular segment spans residues 24–534; the sequence is QLSDEATLVA…LRYNHRVSYR (511 aa). N-linked (GlcNAc...) asparagine glycans are attached at residues Asn46, Asn61, Asn78, and Asn108. 18 LRR repeats span residues 67-85, 86-108, 110-132, 133-157, 159-181, 182-205, 206-229, 231-254, 256-276, 278-300, 301-325, 326-349, 350-373, 375-397, 399-421, 422-446, 447-469, and 471-492; these read MLDLSGLQLRGNVTLISDL, RSLKHLDLSGNNFNGRIPTSFGN, SELEFLDLSLNRFVGAIPVEFGK, LRGLRAFNISNNLLVGEIPDELKVL, RLEEFQVSGNGLNGSIPHWVGNL, SSLRVFTAYENDLVGEIPNGLGLV, SELELLNLHSNQLEGKIPKGIFEK, KLKVLVLTQNRLTGELPEAVGICS, LSSIRIGNNELVGVIPRTIGN, SGLTYFEADKNNLSGEIVAEFSK, CSNLTLLNLAANGFAGTIPTELGQL, INLQELILSGNSLFGEIPKSFLGS, GNLNKLDLSNNRLNGTIPKELCSM, RLQYLLLDQNSIRGDIPHEIGNC, KLLQLQLGRNYLTGTIPPEIGRM, RNLQIALNLSFNHLHGSLPPELGKL, DKLVSLDVSNNLLTGSIPPLLKG, and MSLIEVNFSNNLLNGPVPVFVP. 3 N-linked (GlcNAc...) asparagine glycosylation sites follow: Asn140, Asn171, and Asn180. Residues Asn276, Asn289, and Asn303 are each glycosylated (N-linked (GlcNAc...) asparagine). Residue Asn363 is glycosylated (N-linked (GlcNAc...) asparagine). An N-linked (GlcNAc...) asparagine glycan is attached at Asn429. N-linked (GlcNAc...) asparagine glycans are attached at residues Asn477 and Asn498. A helical transmembrane segment spans residues 535 to 555; the sequence is IVLAVIGSGVAVFVSVTVVVL. Topologically, residues 556 to 890 are cytoplasmic; that stretch reads LFMMREKQEK…EMLQEVKQIK (335 aa). The Protein kinase domain occupies 608–886; that stretch reads MKESNKLSTG…KKVVEMLQEV (279 aa). Residues 614 to 622 and Lys636 each bind ATP; that span reads LSTGTFSSV. Asp735 serves as the catalytic Proton acceptor.

The protein belongs to the protein kinase superfamily. Tyr protein kinase family. As to expression, expressed in the vascular strands of cotyledons, the shoot apex, hypocotyls, roots, leaves, stems and flowers.

It is found in the cell membrane. It catalyses the reaction L-tyrosyl-[protein] + ATP = O-phospho-L-tyrosyl-[protein] + ADP + H(+). In terms of biological role, leucine-rich repeat receptor-like protein kinase that may play a role in vascular tissues development. The chain is Leucine-rich repeat receptor-like tyrosine-protein kinase PXC3 from Arabidopsis thaliana (Mouse-ear cress).